A 126-amino-acid polypeptide reads, in one-letter code: Large ribosomal subunit protein bL12 (126 aa).

The protein belongs to the bacterial ribosomal protein bL12 family. Homodimer. Part of the ribosomal stalk of the 50S ribosomal subunit. Forms a multimeric L10(L12)X complex, where L10 forms an elongated spine to which 2 to 4 L12 dimers bind in a sequential fashion. Binds GTP-bound translation factors.

Functionally, forms part of the ribosomal stalk which helps the ribosome interact with GTP-bound translation factors. Is thus essential for accurate translation. The protein is Large ribosomal subunit protein bL12 of Geotalea daltonii (strain DSM 22248 / JCM 15807 / FRC-32) (Geobacter daltonii).